A 250-amino-acid chain; its full sequence is ATP synthase subunit a (250 aa).

The next 6 membrane-spanning stretches (helical) occupy residues 26–46 (FTNA…FLYF), 84–104 (FFPL…LGMF), 114–134 (IIVT…YGFY), 143–163 (VFVP…IEII), 193–213 (FVAS…LPLI), and 216–236 (VALT…FAVL).

The protein belongs to the ATPase A chain family. As to quaternary structure, F-type ATPases have 2 components, CF(1) - the catalytic core - and CF(0) - the membrane proton channel. CF(1) has five subunits: alpha(3), beta(3), gamma(1), delta(1), epsilon(1). CF(0) has three main subunits: a(1), b(2) and c(9-12). The alpha and beta chains form an alternating ring which encloses part of the gamma chain. CF(1) is attached to CF(0) by a central stalk formed by the gamma and epsilon chains, while a peripheral stalk is formed by the delta and b chains.

The protein resides in the cell inner membrane. Its function is as follows. Key component of the proton channel; it plays a direct role in the translocation of protons across the membrane. The protein is ATP synthase subunit a of Rhizobium etli (strain ATCC 51251 / DSM 11541 / JCM 21823 / NBRC 15573 / CFN 42).